Consider the following 221-residue polypeptide: Imidazole glycerol phosphate synthase subunit HisH (221 aa).

The Glutamine amidotransferase type-1 domain occupies 9-221 (DVVIIDTGCA…QILGNFLKMQ (213 aa)). C84 (nucleophile) is an active-site residue. Active-site residues include H202 and E204.

In terms of assembly, heterodimer of HisH and HisF.

It is found in the cytoplasm. The enzyme catalyses 5-[(5-phospho-1-deoxy-D-ribulos-1-ylimino)methylamino]-1-(5-phospho-beta-D-ribosyl)imidazole-4-carboxamide + L-glutamine = D-erythro-1-(imidazol-4-yl)glycerol 3-phosphate + 5-amino-1-(5-phospho-beta-D-ribosyl)imidazole-4-carboxamide + L-glutamate + H(+). It catalyses the reaction L-glutamine + H2O = L-glutamate + NH4(+). The protein operates within amino-acid biosynthesis; L-histidine biosynthesis; L-histidine from 5-phospho-alpha-D-ribose 1-diphosphate: step 5/9. In terms of biological role, IGPS catalyzes the conversion of PRFAR and glutamine to IGP, AICAR and glutamate. The HisH subunit catalyzes the hydrolysis of glutamine to glutamate and ammonia as part of the synthesis of IGP and AICAR. The resulting ammonia molecule is channeled to the active site of HisF. This is Imidazole glycerol phosphate synthase subunit HisH from Shewanella oneidensis (strain ATCC 700550 / JCM 31522 / CIP 106686 / LMG 19005 / NCIMB 14063 / MR-1).